A 237-amino-acid polypeptide reads, in one-letter code: Casparian strip membrane protein 2 (237 aa).

The segment at 1–48 (MSGSDTSGSVHVDEHGHGHGKASSSYDGAGAPAPAPAPFQGHRKAGSG) is disordered. Topologically, residues 1–69 (MSGSDTSGSV…GSGGDGLRRC (69 aa)) are cytoplasmic. A helical membrane pass occupies residues 70–90 (LGLIDFVLRVAAFGPTLAAAI). At 91 to 117 (SIGTSDERLSVFTNYFQFRARFDDFPA) the chain is on the extracellular side. Residues 118-138 (FEFFIVANAIAAGYMVLSLPF) form a helical membrane-spanning segment. Residues 139–152 (SAATIMSSKATGVK) lie on the Cytoplasmic side of the membrane. The chain crosses the membrane as a helical span at residues 153–173 (LLLLICDTIMVGLLTAAASAA). At 174–205 (AAMVYVAHEGNLRANWVPICLQFHGFCQRTSG) the chain is on the extracellular side. Residues 206–226 (AVIASFLAVFVLMVLIVMAAF) form a helical membrane-spanning segment. Over 227–237 (TMPRRTHHTAS) the chain is Cytoplasmic.

Belongs to the Casparian strip membrane proteins (CASP) family. Homodimer and heterodimers.

Its subcellular location is the cell membrane. In terms of biological role, regulates membrane-cell wall junctions and localized cell wall deposition. Required for establishment of the Casparian strip membrane domain (CSD) and the subsequent formation of Casparian strips, a cell wall modification of the root endodermis that determines an apoplastic barrier between the intraorganismal apoplasm and the extraorganismal apoplasm and prevents lateral diffusion. This chain is Casparian strip membrane protein 2, found in Oryza sativa subsp. japonica (Rice).